The following is a 249-amino-acid chain: uncharacterized protein (249 aa).

In terms of domain architecture, S4 RNA-binding spans 4–71 (VRINKFLSEA…RKRYIILNKP (68 aa)). Catalysis depends on Asp-106, which acts as the Nucleophile.

It belongs to the pseudouridine synthase RsuA family.

It carries out the reaction a uridine in RNA = a pseudouridine in RNA. This is an uncharacterized protein from Aquifex aeolicus (strain VF5).